The following is a 180-amino-acid chain: ADP-ribosylation factor 4 (180 aa).

A lipid anchor (N-myristoyl glycine) is attached at Gly-2. Residues 24 to 31 (GLDAAGKT), 67 to 71 (DVGGQ), and 126 to 129 (NKQD) each bind GTP.

The protein belongs to the small GTPase superfamily. Arf family.

The protein localises to the golgi apparatus. GTP-binding protein involved in protein trafficking; may modulate vesicle budding and uncoating within the Golgi apparatus. May be involved in ciliogenesis. The sequence is that of ADP-ribosylation factor 4 (arf4) from Xenopus laevis (African clawed frog).